Reading from the N-terminus, the 1310-residue chain is Vacuolating cytotoxin autotransporter (1310 aa).

Positions 1 to 30 (MEIQQTHRKINRPIISLALVGVLMGTELGA) are cleaved as a signal peptide. The disordered stretch occupies residues 339 to 364 (PEGGYESKTKDNPQNNPKNDAQKTEI). Residues 350-364 (NPQNNPKNDAQKTEI) are compositionally biased toward polar residues. Residues 1038–1310 (KYEKPTNVWA…ASNLGMRYSF (273 aa)) enclose the Autotransporter domain.

It is found in the periplasm. The protein localises to the secreted. Its subcellular location is the cell surface. It localises to the cell outer membrane. Induces vacuolation of eukaryotic cells. Causes ulceration and gastric lesions. This Helicobacter pylori (Campylobacter pylori) protein is Vacuolating cytotoxin autotransporter (vacA).